Consider the following 101-residue polypeptide: CRISPR-associated endoribonuclease Cas2 (101 aa).

Residue Asp-8 coordinates Mg(2+).

It belongs to the CRISPR-associated endoribonuclease Cas2 protein family. As to quaternary structure, homodimer, forms a heterotetramer with a Cas1 homodimer. It depends on Mg(2+) as a cofactor.

Functionally, CRISPR (clustered regularly interspaced short palindromic repeat), is an adaptive immune system that provides protection against mobile genetic elements (viruses, transposable elements and conjugative plasmids). CRISPR clusters contain sequences complementary to antecedent mobile elements and target invading nucleic acids. CRISPR clusters are transcribed and processed into CRISPR RNA (crRNA). Functions as a ssRNA-specific endoribonuclease. Involved in the integration of spacer DNA into the CRISPR cassette. This is CRISPR-associated endoribonuclease Cas2 from Parvibaculum lavamentivorans (strain DS-1 / DSM 13023 / NCIMB 13966).